The chain runs to 135 residues: Histone H3.3C (135 aa).

The interval 1-41 (MARTKQTARKSTGGKAPRKQLATKAARKSTPSTCGVKPHRY) is disordered. The residue at position 3 (R3) is an Asymmetric dimethylarginine; by PRMT6; alternate. The residue at position 3 (R3) is a Citrulline; alternate. Residue T4 is modified to Phosphothreonine; by HASPIN. K5 carries the allysine; alternate modification. An N6,N6,N6-trimethyllysine; alternate modification is found at K5. At K5 the chain carries N6,N6-dimethyllysine; alternate. K5 carries the post-translational modification N6-(2-hydroxyisobutyryl)lysine; alternate. N6-(beta-hydroxybutyryl)lysine; alternate is present on K5. N6-acetyllysine; alternate is present on K5. K5 bears the N6-methyllysine; alternate mark. A 5-glutamyl dopamine; alternate modification is found at Q6. A 5-glutamyl serotonin; alternate modification is found at Q6. Position 7 is a phosphothreonine; by PKC (T7). Citrulline; alternate is present on R9. R9 carries the post-translational modification Symmetric dimethylarginine; by PRMT5; alternate. N6,N6,N6-trimethyllysine; alternate is present on K10. N6,N6-dimethyllysine; alternate is present on K10. K10 is subject to N6-(2-hydroxyisobutyryl)lysine; alternate. N6-(beta-hydroxybutyryl)lysine; alternate is present on K10. K10 carries the post-translational modification N6-acetyllysine; alternate. K10 is modified (N6-methyllysine; alternate). K10 carries the N6-lactoyllysine; alternate modification. S11 is modified (ADP-ribosylserine; alternate). Residue S11 is modified to Phosphoserine; alternate; by AURKB, AURKC, RPS6KA3, RPS6KA4 and RPS6KA5. T12 is subject to Phosphothreonine; by PKC. N6-(2-hydroxyisobutyryl)lysine; alternate is present on K15. Position 15 is an N6-(beta-hydroxybutyryl)lysine; alternate (K15). Residue K15 is modified to N6-acetyllysine; alternate. N6-lactoyllysine; alternate is present on K15. K15 bears the N6-glutaryllysine; alternate mark. K15 carries the N6-succinyllysine; alternate modification. R18 is modified (citrulline; alternate). Position 18 is an asymmetric dimethylarginine; by CARM1; alternate (R18). An N6-(2-hydroxyisobutyryl)lysine; alternate mark is found at K19 and K24. Residues K19 and K24 each carry the N6-(beta-hydroxybutyryl)lysine; alternate modification. 2 positions are modified to N6-acetyllysine; alternate: K19 and K24. K19 and K24 each carry N6-methyllysine; alternate. 2 positions are modified to N6-lactoyllysine; alternate: K19 and K24. N6-glutaryllysine; alternate is present on residues K19 and K24. An N6-butyryllysine; alternate mark is found at K19 and K24. The residue at position 27 (R27) is a Citrulline. K28 carries the N6,N6,N6-trimethyllysine; alternate modification. K28 carries the post-translational modification N6,N6-dimethyllysine; alternate. The residue at position 28 (K28) is an N6-(2-hydroxyisobutyryl)lysine; alternate. At K28 the chain carries N6-acetyllysine; alternate. K28 bears the N6-methyllysine; alternate mark. K28 carries the post-translational modification N6-lactoyllysine; alternate. K28 is subject to N6-glutaryllysine; alternate. The residue at position 29 (S29) is an ADP-ribosylserine; alternate. S29 bears the Phosphoserine; alternate; by AURKB, AURKC and RPS6KA5 mark. S32 bears the Phosphoserine mark. K37 is modified (N6-methyllysine). Y41 is subject to Phosphotyrosine. K56 is modified (N6,N6,N6-trimethyllysine; alternate). Residue K56 is modified to N6-(2-hydroxyisobutyryl)lysine; alternate. Residue K56 is modified to N6-(beta-hydroxybutyryl)lysine; alternate. K56 bears the N6-acetyllysine; alternate mark. K56 carries the post-translational modification N6-lactoyllysine; alternate. Residue K56 is modified to N6-glutaryllysine; alternate. N6-succinyllysine; alternate is present on K56. K56 is subject to N6-methyllysine; by EHMT2; alternate. S57 is modified (phosphoserine). An N6-(2-hydroxyisobutyryl)lysine; alternate modification is found at K64. N6-methyllysine; alternate is present on K64. T80 bears the Phosphothreonine mark. The residue at position 86 (S86) is a Phosphoserine. T107 is modified (phosphothreonine). 2 positions are modified to N6-glutaryllysine; alternate: K115 and K122. K115 is modified (N6-acetyllysine). K122 is modified (N6-(2-hydroxyisobutyryl)lysine; alternate). K122 carries the N6-acetyllysine; alternate modification. K122 is modified (N6-methyllysine; alternate). K122 is modified (N6-succinyllysine; alternate).

It belongs to the histone H3 family. The nucleosome is a histone octamer containing two molecules each of H2A, H2B, H3 and H4 assembled in one H3-H4 heterotetramer and two H2A-H2B heterodimers. The octamer wraps approximately 147 bp of DNA. Acetylation is generally linked to gene activation. Acetylation on Lys-10 (H3K9ac) impairs methylation at Arg-9 (H3R8me2s). Acetylation on Lys-19 (H3K18ac) and Lys-24 (H3K24ac) favors methylation at Arg-18 (H3R17me). Acetylation at Lys-122 (H3K122ac) by EP300/p300 plays a central role in chromatin structure: localizes at the surface of the histone octamer and stimulates transcription, possibly by promoting nucleosome instability. Post-translationally, citrullination at Arg-9 (H3R8ci) and/or Arg-18 (H3R17ci) by PADI4 impairs methylation and represses transcription. In terms of processing, asymmetric dimethylation at Arg-18 (H3R17me2a) by CARM1 is linked to gene activation. Symmetric dimethylation at Arg-9 (H3R8me2s) by PRMT5 is linked to gene repression. Asymmetric dimethylation at Arg-3 (H3R2me2a) by PRMT6 is linked to gene repression and is mutually exclusive with H3 Lys-5 methylation (H3K4me2 and H3K4me3). H3R2me2a is present at the 3' of genes regardless of their transcription state and is enriched on inactive promoters, while it is absent on active promoters. Methylation at Lys-5 (H3K4me) is linked to gene activation. Methylation at Lys-5 (H3K4me) facilitates subsequent acetylation of H3 and H4. Methylation at Lys-10 (H3K9me) and Lys-28 (H3K27me) are linked to gene repression. Methylation at Lys-10 (H3K9me) is a specific target for HP1 proteins (CBX1, CBX3 and CBX5) and prevents subsequent phosphorylation at Ser-11 (H3S10ph) and acetylation of H3 and H4. Methylation at Lys-5 (H3K4me) requires preliminary monoubiquitination of H2B at 'Lys-120'. Methylation at Lys-10 (H3K9me) and Lys-28 (H3K27me) are enriched in inactive X chromosome chromatin. Monomethylation at Lys-56 (H3K56me1) by EHMT2/G9A in G1 phase promotes interaction with PCNA and is required for DNA replication. Post-translationally, phosphorylated at Thr-4 (H3T3ph) by HASPIN during prophase and dephosphorylated during anaphase. Phosphorylation at Ser-11 (H3S10ph) by AURKB is crucial for chromosome condensation and cell-cycle progression during mitosis and meiosis. In addition phosphorylation at Ser-11 (H3S10ph) by RPS6KA4 and RPS6KA5 is important during interphase because it enables the transcription of genes following external stimulation, like mitogens, stress, growth factors or UV irradiation and result in the activation of genes, such as c-fos and c-jun. Phosphorylation at Ser-11 (H3S10ph), which is linked to gene activation, prevents methylation at Lys-10 (H3K9me) but facilitates acetylation of H3 and H4. Phosphorylation at Ser-11 (H3S10ph) by AURKB mediates the dissociation of HP1 proteins (CBX1, CBX3 and CBX5) from heterochromatin. Phosphorylation at Ser-11 (H3S10ph) is also an essential regulatory mechanism for neoplastic cell transformation. Phosphorylated at Ser-29 (H3S28ph) by MAP3K20 isoform 1, RPS6KA5 or AURKB during mitosis or upon ultraviolet B irradiation. Phosphorylation at Thr-7 (H3T6ph) by PRKCB is a specific tag for epigenetic transcriptional activation that prevents demethylation of Lys-5 (H3K4me) by LSD1/KDM1A. At centromeres, specifically phosphorylated at Thr-12 (H3T11ph) from prophase to early anaphase, by DAPK3 and PKN1. Phosphorylation at Thr-12 (H3T11ph) by PKN1 or isoform M2 of PKM (PKM2) is a specific tag for epigenetic transcriptional activation that promotes demethylation of Lys-10 (H3K9me) by KDM4C/JMJD2C. Phosphorylation at Tyr-41 (H3Y41ph) by JAK2 promotes exclusion of CBX5 (HP1 alpha) from chromatin. In terms of processing, lysine deamination at Lys-5 (H3K4all) to form allysine is mediated by LOXL2. Allysine formation by LOXL2 only takes place on H3K4me3 and results in gene repression. Butyrylation of histones marks active promoters and competes with histone acetylation. It is present during late spermatogenesis. Post-translationally, succinylated. Desuccinylation at Lys-122 (H3K122succ) by SIRT7 in response to DNA damage promotes chromatin condensation and double-strand breaks (DSBs) repair. In terms of processing, serine ADP-ribosylation constitutes the primary form of ADP-ribosylation of proteins in response to DNA damage. Serine ADP-ribosylation at Ser-11 (H3S10ADPr) is mutually exclusive with phosphorylation at Ser-11 (H3S10ph) and impairs acetylation at Lys-10 (H3K9ac). Specifically expressed in the seminiferous tubules of testis.

It localises to the nucleus. Its subcellular location is the chromosome. Core component of nucleosome. Nucleosomes wrap and compact DNA into chromatin, limiting DNA accessibility to the cellular machineries which require DNA as a template. Histones thereby play a central role in transcription regulation, DNA repair, DNA replication and chromosomal stability. DNA accessibility is regulated via a complex set of post-translational modifications of histones, also called histone code, and nucleosome remodeling. Hominid-specific H3.5/H3F3C preferentially colocalizes with euchromatin, and it is associated with actively transcribed genes. This is Histone H3.3C from Homo sapiens (Human).